Consider the following 156-residue polypeptide: Peroxisome assembly protein 22 (156 aa).

Residues 24–46 traverse the membrane as a helical segment; the sequence is LSIIAVGVLSTVAVTVGYLLYLY.

Belongs to the peroxin-22 family.

Its subcellular location is the peroxisome membrane. Involved in peroxisome biogenesis. In Kluyveromyces lactis (strain ATCC 8585 / CBS 2359 / DSM 70799 / NBRC 1267 / NRRL Y-1140 / WM37) (Yeast), this protein is Peroxisome assembly protein 22 (PEX22).